A 133-amino-acid polypeptide reads, in one-letter code: Holo-[acyl-carrier-protein] synthase (133 aa).

Mg(2+) contacts are provided by Asp8 and Glu58.

Belongs to the P-Pant transferase superfamily. AcpS family. It depends on Mg(2+) as a cofactor.

It is found in the cytoplasm. The catalysed reaction is apo-[ACP] + CoA = holo-[ACP] + adenosine 3',5'-bisphosphate + H(+). Transfers the 4'-phosphopantetheine moiety from coenzyme A to a Ser of acyl-carrier-protein. The polypeptide is Holo-[acyl-carrier-protein] synthase (Sphingopyxis alaskensis (strain DSM 13593 / LMG 18877 / RB2256) (Sphingomonas alaskensis)).